The primary structure comprises 207 residues: SPRY domain-containing protein 4 (207 aa).

A B30.2/SPRY domain is found at 12-207 (YRWGTKRWGV…HSGLEVPKGL (196 aa)). An N6-acetyllysine mark is found at lysine 53 and lysine 130. Lysine 139 is subject to N6-succinyllysine.

The chain is SPRY domain-containing protein 4 (Spryd4) from Rattus norvegicus (Rat).